The following is an 81-amino-acid chain: Small ribosomal subunit protein bS16 (81 aa).

The protein belongs to the bacterial ribosomal protein bS16 family.

In Lachnoclostridium phytofermentans (strain ATCC 700394 / DSM 18823 / ISDg) (Clostridium phytofermentans), this protein is Small ribosomal subunit protein bS16.